A 347-amino-acid chain; its full sequence is Protease HtpX homolog (347 aa).

Transmembrane regions (helical) follow at residues 8-28 (VALGLYIVGYIFMLIIAATIA), 44-64 (AMALTAVLVVLTTAFIIYLFV), 76-96 (LSFLLGLIFFVVLMNIITYFA), and 141-163 (AFAYGNFLTGRYVAVTSSMLALT). Zn(2+) is bound at residue histidine 174. Residue glutamate 175 is part of the active site. Histidine 178 contributes to the Zn(2+) binding site. Transmembrane regions (helical) follow at residues 185 to 205 (AIMLLFGILPSIVYYLGVTAV) and 221 to 241 (ILAAVGIAAVIVSFLIQLLVL). Residue glutamate 248 coordinates Zn(2+).

This sequence belongs to the peptidase M48B family. Zn(2+) serves as cofactor.

It localises to the cell membrane. In Pyrobaculum aerophilum (strain ATCC 51768 / DSM 7523 / JCM 9630 / CIP 104966 / NBRC 100827 / IM2), this protein is Protease HtpX homolog.